Reading from the N-terminus, the 245-residue chain is Putative transport permease YvfS (245 aa).

The next 6 helical transmembrane spans lie at 20–40 (YFVL…TNVV), 53–73 (HYLM…TLGI), 103–123 (IGQS…GAII), 137–157 (GLWI…IGLM), 164–184 (AGIS…WMPF), and 214–234 (GSPT…FMLL). Residues 20–242 (YFVLWSLIMP…LLSKYIRRKQ (223 aa)) form the ABC transmembrane type-2 domain.

The protein belongs to the ABC-2 integral membrane protein family.

It is found in the cell membrane. In Bacillus subtilis (strain 168), this protein is Putative transport permease YvfS (yvfS).